Reading from the N-terminus, the 215-residue chain is uncharacterized protein (215 aa).

Active-site charge relay system residues include Ser-114, Asp-162, and His-194.

This sequence belongs to the AB hydrolase superfamily. AB hydrolase 2 family.

This is an uncharacterized protein from Rickettsia felis (strain ATCC VR-1525 / URRWXCal2) (Rickettsia azadi).